We begin with the raw amino-acid sequence, 251 residues long: BRI3-binding protein (251 aa).

A run of 4 helical transmembrane segments spans residues 13-33 (AGLL…PGAQ), 125-145 (ALLL…TLGF), 146-166 (TFSV…VVLF), and 185-205 (VLPL…GFYW). A coiled-coil region spans residues 217-247 (NPSVEEKLEHLEKQVRLLNIRLNRVLESLDR). An N6-acetyllysine modification is found at Lys229. At Ser248 the chain carries Phosphoserine.

Interacts with LETMD1. Interacts with BRI3 (isoforms 1 and 2); the interaction with isoform 2 is weaker than with isoform 1. Interacts with BRI3; the interaction is weak. Interacts with TMEM238L. Most abundantly expressed in brain, liver and kidney. Overexpressed in leukemia and lymphoma cell lines, as well as in various carcinomas.

The protein resides in the mitochondrion outer membrane. Its function is as follows. Involved in tumorigenesis and may function by stabilizing p53/TP53. This chain is BRI3-binding protein, found in Homo sapiens (Human).